A 452-amino-acid polypeptide reads, in one-letter code: Heat shock protein 83 (452 aa).

Arginine 124 lines the ATP pocket. The TPR repeat-binding signature appears at 448 to 452; sequence MEQVD.

It belongs to the heat shock protein 90 family. In terms of assembly, homodimer.

The protein resides in the cytoplasm. In terms of biological role, molecular chaperone that promotes the maturation, structural maintenance and proper regulation of specific target proteins involved for instance in cell cycle control and signal transduction. Undergoes a functional cycle that is linked to its ATPase activity. This cycle probably induces conformational changes in the client proteins, thereby causing their activation. Interacts dynamically with various co-chaperones that modulate its substrate recognition, ATPase cycle and chaperone function. The sequence is that of Heat shock protein 83 (HSP83) from Leishmania donovani.